The primary structure comprises 232 residues: Glycerol-3-phosphate acyltransferase 4 (232 aa).

6 helical membrane passes run 4 to 24, 54 to 76, 80 to 99, 107 to 127, 143 to 163, and 168 to 188; these read VFLIMIPAGYLVGAIPMAYLL, LGLAVFVFDVSKGAIIILLAGWL, LWQQIVVGLLTIAGHNWPVF, GIATSLGVALVMAPVPALIAL, VFLGVGALPVMSGYFHGFFGV, and TVTWGFAGLFLIMIVRRLMAP.

Belongs to the PlsY family. Probably interacts with PlsX.

The protein localises to the cell membrane. The catalysed reaction is an acyl phosphate + sn-glycerol 3-phosphate = a 1-acyl-sn-glycero-3-phosphate + phosphate. The protein operates within lipid metabolism; phospholipid metabolism. In terms of biological role, catalyzes the transfer of an acyl group from acyl-phosphate (acyl-PO(4)) to glycerol-3-phosphate (G3P) to form lysophosphatidic acid (LPA). This enzyme utilizes acyl-phosphate as fatty acyl donor, but not acyl-CoA or acyl-ACP. The protein is Glycerol-3-phosphate acyltransferase 4 of Dehalococcoides mccartyi (strain CBDB1).